A 394-amino-acid polypeptide reads, in one-letter code: Uroporphyrinogen decarboxylase 2, chloroplastic (394 aa).

Residues 74-78 (RQAGR), F93, S123, D124, Y201, S256, and H371 each bind substrate.

Belongs to the uroporphyrinogen decarboxylase family. Homodimer.

It is found in the plastid. The protein localises to the chloroplast. The enzyme catalyses uroporphyrinogen III + 4 H(+) = coproporphyrinogen III + 4 CO2. It functions in the pathway porphyrin-containing compound metabolism; protoporphyrin-IX biosynthesis; coproporphyrinogen-III from 5-aminolevulinate: step 4/4. The protein operates within porphyrin-containing compound metabolism; chlorophyll biosynthesis. Its function is as follows. Catalyzes the decarboxylation of four acetate groups of uroporphyrinogen-III to yield coproporphyrinogen-III. The polypeptide is Uroporphyrinogen decarboxylase 2, chloroplastic (HEME2) (Arabidopsis thaliana (Mouse-ear cress)).